The following is a 211-amino-acid chain: Dephospho-CoA kinase (211 aa).

A DPCK domain is found at Val3–Ala206. Ala11–Thr16 contributes to the ATP binding site.

The protein belongs to the CoaE family.

Its subcellular location is the cytoplasm. It carries out the reaction 3'-dephospho-CoA + ATP = ADP + CoA + H(+). The protein operates within cofactor biosynthesis; coenzyme A biosynthesis; CoA from (R)-pantothenate: step 5/5. Its function is as follows. Catalyzes the phosphorylation of the 3'-hydroxyl group of dephosphocoenzyme A to form coenzyme A. The chain is Dephospho-CoA kinase from Anaeromyxobacter dehalogenans (strain 2CP-C).